Consider the following 643-residue polypeptide: Methyl-accepting chemotaxis protein McpA (643 aa).

The chain crosses the membrane as a helical span at residues 24–44 (ILLSACGVVVLAFALFTLYND). Positions 49–273 (NTIRQNIEAS…GLPSAQWYIG (225 aa)) constitute a Cache domain. A helical membrane pass occupies residues 293-313 (IIAMLIAVAAIAGLLGLLIPV). Residues 312-366 (PVLMSPLTTMGRAMRDIAEGEGDLTRRLAVQNKDEFGELATSFNRFVERIHASIS) enclose the HAMP domain. A Methyl-accepting transducer domain is found at 371 to 607 (ATRLVHDLSE…SLNLDITQIN (237 aa)).

Belongs to the methyl-accepting chemotaxis (MCP) protein family.

Its subcellular location is the cell membrane. Functionally, chemotactic-signal transducers respond to changes in the concentration of attractants and repellents in the environment, transduce a signal from the outside to the inside of the cell, and facilitate sensory adaptation through the variation of the level of methylation. McpA is a chemoreceptor that binds to 12 different L-amino acids and mediates chemotaxis toward these amino acids. This Pseudomonas putida (strain ATCC 47054 / DSM 6125 / CFBP 8728 / NCIMB 11950 / KT2440) protein is Methyl-accepting chemotaxis protein McpA.